The sequence spans 1235 residues: Insulin receptor substrate 1 (1235 aa).

Ser3 carries the phosphoserine modification. Positions 3-133 are mediates interaction with PHIP; sequence SPPDTDGFSD…AGGGCGGSCS (131 aa). Residues 12–115 form the PH domain; sequence DVRKVGYLRK…WYQALLQLHN (104 aa). Position 99 is a phosphoserine; by CK2 (Ser99). Residues 155–259 form the IRS-type PTB domain; sequence FKEVWQVILK…EAMRAMSDEF (105 aa). Residues 258-425 are disordered; it reads EFRPRTKSQS…SDGGFISSDE (168 aa). Ser265 and Ser302 each carry phosphoserine; by RPS6KB1. Residues 265 to 276 show a composition bias toward low complexity; it reads SQSSSSCSNPIS. Residue Ser307 is modified to Phosphoserine; by IKKB, MAPK8 and RPS6KB1. 4 positions are modified to phosphoserine: Ser318, Ser325, Ser340, and Ser343. Over residues 349–358 the composition is skewed to basic residues; the sequence is THAHRHRGSS. Low complexity-rich tracts occupy residues 378–399 and 407–419; these read SPSA…GSTS and SSAS…SDGG. Phosphoserine is present on Ser414. Phosphothreonine is present on residues Thr441 and Thr448. Position 460 is a phosphotyrosine; by INSR (Tyr460). The short motif at 460 to 463 is the YXXM motif 1 element; sequence YICM. Thr502 is subject to Phosphothreonine; by CK2. The segment at 520–539 is disordered; sequence THSAGTSPTISHQKTPSQSS. Phosphoserine; by RPS6KB1 is present on Ser522. Over residues 522 to 539 the composition is skewed to polar residues; the sequence is SAGTSPTISHQKTPSQSS. 2 short sequence motifs (YXXM motif) span residues 546–549 and 608–611; these read YTEM and YMPM. Tyr608 is subject to Phosphotyrosine; by INSR. Position 612 is a phosphoserine (Ser612). Tyr628 carries the phosphotyrosine; by INSR modification. The short motif at 628 to 631 is the YXXM motif 4 element; sequence YMPM. Ser632 bears the Phosphoserine; by RPS6KB1 and ROCK2 mark. Tyr658 carries the post-translational modification Phosphotyrosine. The YXXM motif 5 motif lies at 658–661; sequence YMMM. The segment covering 669-689 has biased composition (low complexity); the sequence is PDIGGGSCSSSSISAAPSGSS. The interval 669-720 is disordered; sequence PDIGGGSCSSSSISAAPSGSSYGKPWTNGVGGHHTHALPHAKPPVESGGGKL. Residues 727–730 carry the YXXM motif 6 motif; the sequence is YMNM. Residues 766 to 921 are disordered; that stretch reads FKHTQRPGEP…ATSRSSPSVR (156 aa). A compositionally biased stretch (basic and acidic residues) spans 771–780; sequence RPGEPEEGAR. Low complexity-rich tracts occupy residues 785-794, 801-810, and 872-881; these read RLSSSSGRLR, DSSSSTSSDS, and QQQQQQQQQQ. Ser789 is subject to Phosphoserine; by AMPK and SIK2. A Phosphoserine modification is found at Ser891. Phosphotyrosine; by INSR occurs at positions 895, 939, and 987. The segment at 895–897 is GRB2-binding; sequence YVN. Short sequence motifs (YXXM motif) lie at residues 939 to 942, 987 to 990, and 1010 to 1013; these read YMNM, YMTM, and YADM. Residues 1024 to 1165 are disordered; sequence LPRTTGAAPP…SAPGCGAAGG (142 aa). Residues 1025–1046 show a composition bias toward low complexity; it reads PRTTGAAPPPSSTASASASVTP. Residues 1072-1084 show a composition bias toward polar residues; that stretch reads TRVNLSPNHNQSA. Position 1099 is a phosphoserine (Ser1099). Ser1100 is subject to Phosphoserine; by RPS6KB1. Residues 1101 to 1114 are compositionally biased toward polar residues; sequence ETFSAPTRAANTVS. Residues 1118–1128 show a composition bias toward gly residues; it reads GAAGGGSGGGS. Tyr1172 is modified (phosphotyrosine; by INSR). The segment at 1177–1235 is disordered; it reads LVKDVKQHPQDCPSQQQSLPPPPPHQPLGSNEGSSPRRSSEDLSTYASINFQKQPEDRQ. A Glycyl lysine isopeptide (Lys-Gly) (interchain with G-Cter in ubiquitin) cross-link involves residue Lys1179. Residues 1204 to 1229 are compositionally biased toward polar residues; it reads LGSNEGSSPRRSSEDLSTYASINFQK. Residue Tyr1222 is modified to Phosphotyrosine; by INSR.

As to quaternary structure, interacts with SOCS7. Interacts (via IRS-type PTB domain) with IGF1R and INSR (via the tyrosine-phosphorylated NPXY motif). Interacts with UBTF, FER and PIK3CA. Interacts (via phosphorylated YXXM motifs) with PIK3R1. Interacts with ROCK1. Interacts (via PH domain) with PHIP. Interacts with GRB2. Interacts with ALK. Interacts with EIF2AK2/PKR. Interacts with GKAP1. Interacts with DGKZ in the absence of insulin; insulin stimulation decreases this interaction. Found in a ternary complex with DGKZ and PIP5K1A in the absence of insulin stimulation. Interacts with SQSTM1; the interaction is disrupted by the presence of tensin TNS2. Interacts with NCK1 (via SH2 domain). Interacts with NCK2 (via SH3 domain). Interacts with SH2B1; this interaction enhances leptin-induced activation of the PI3-kinase pathway. Interacts with DVL2; this interaction promotes the Wnt/beta-catenin signaling pathway. Interacts with JAK1. In terms of processing, serine phosphorylation of IRS1 is a mechanism for insulin resistance. Ser-307 phosphorylation inhibits insulin action through disruption of IRS1 interaction with the insulin receptor, and Ser-789 phosphorylation is increased in the liver of insulin-resistant rats. Phosphorylation of Tyr-895 is required for GRB2-binding. Phosphorylated by ALK. Phosphorylated at Ser-265, Ser-302, Ser-632 and Ser-1100 by RPS6KB1; phosphorylation induces accelerated degradation of IRS1. Phosphorylated on tyrosine residues in response to insulin. In skeletal muscles, dephosphorylated on Tyr-608 by TNS2 under anabolic conditions; dephosphorylation results in the proteasomal degradation of IRS1. Post-translationally, ubiquitinated by the Cul7-RING(FBXW8) complex in a mTOR-dependent manner, leading to its degradation: the Cul7-RING(FBXW8) complex recognizes and binds IRS1 previously phosphorylated by S6 kinase (RPS6KB1 or RPS6KB2). Ubiquitinated by TRAF4 through 'Lys-29' linkage; this ubiquitination regulates the interaction of IRS1 with IGFR and IRS1 tyrosine phosphorylation upon IGF1 stimulation. S-nitrosylation at by BLVRB inhibits its activity.

The protein localises to the cytoplasm. It is found in the nucleus. Functionally, signaling adapter protein that participates in the signal transduction from two prominent receptor tyrosine kinases, insulin receptor/INSR and insulin-like growth factor I receptor/IGF1R. Plays therefore an important role in development, growth, glucose homeostasis as well as lipid metabolism. Upon phosphorylation by the insulin receptor, functions as a signaling scaffold that propagates insulin action through binding to SH2 domain-containing proteins including the p85 regulatory subunit of PI3K, NCK1, NCK2, GRB2 or SHP2. Recruitment of GRB2 leads to the activation of the guanine nucleotide exchange factor SOS1 which in turn triggers the Ras/Raf/MEK/MAPK signaling cascade. Activation of the PI3K/AKT pathway is responsible for most of insulin metabolic effects in the cell, and the Ras/Raf/MEK/MAPK is involved in the regulation of gene expression and in cooperation with the PI3K pathway regulates cell growth and differentiation. Acts a positive regulator of the Wnt/beta-catenin signaling pathway through suppression of DVL2 autophagy-mediated degradation leading to cell proliferation. This Rattus norvegicus (Rat) protein is Insulin receptor substrate 1 (Irs1).